The sequence spans 311 residues: GTP cyclohydrolase FolE2 (311 aa).

Belongs to the GTP cyclohydrolase IV family.

The catalysed reaction is GTP + H2O = 7,8-dihydroneopterin 3'-triphosphate + formate + H(+). It functions in the pathway cofactor biosynthesis; 7,8-dihydroneopterin triphosphate biosynthesis; 7,8-dihydroneopterin triphosphate from GTP: step 1/1. Converts GTP to 7,8-dihydroneopterin triphosphate. This Xanthomonas campestris pv. campestris (strain B100) protein is GTP cyclohydrolase FolE2.